We begin with the raw amino-acid sequence, 270 residues long: Small ribosomal subunit protein eS1 (270 aa).

Positions 235–270 are disordered; that stretch reads GTSKGGAASTAAVAKGEEGVKVDRPEGYEPPVLETV. Residues 239 to 248 are compositionally biased toward low complexity; sequence GGAASTAAVA. Residues 249-261 are compositionally biased toward basic and acidic residues; it reads KGEEGVKVDRPEG.

This sequence belongs to the eukaryotic ribosomal protein eS1 family. Component of the small ribosomal subunit. Mature ribosomes consist of a small (40S) and a large (60S) subunit. The 40S subunit contains about 33 different proteins and 1 molecule of RNA (18S). The 60S subunit contains about 49 different proteins and 3 molecules of RNA (28S, 5.8S and 5S).

It is found in the cytoplasm. The polypeptide is Small ribosomal subunit protein eS1 (Ixodes scapularis (Black-legged tick)).